The primary structure comprises 287 residues: Glutamate racemase (287 aa).

Substrate is bound by residues 32–33 and 64–65; these read DS and YG. Cys96 functions as the Proton donor/acceptor in the catalytic mechanism. Substrate is bound at residue 97–98; it reads NT. Residue Cys208 is the Proton donor/acceptor of the active site. Position 209–210 (209–210) interacts with substrate; the sequence is TH.

Belongs to the aspartate/glutamate racemases family.

It catalyses the reaction L-glutamate = D-glutamate. Its pathway is cell wall biogenesis; peptidoglycan biosynthesis. Provides the (R)-glutamate required for cell wall biosynthesis. This is Glutamate racemase from Yersinia enterocolitica serotype O:8 / biotype 1B (strain NCTC 13174 / 8081).